Here is a 493-residue protein sequence, read N- to C-terminus: Cobyric acid synthase (493 aa).

Residues 252–440 (PVKIVVLRLR…IHGIFESDSL (189 aa)) enclose the GATase cobBQ-type domain. Cysteine 333 functions as the Nucleophile in the catalytic mechanism. The active site involves histidine 432.

Belongs to the CobB/CobQ family. CobQ subfamily.

It participates in cofactor biosynthesis; adenosylcobalamin biosynthesis. Catalyzes amidations at positions B, D, E, and G on adenosylcobyrinic A,C-diamide. NH(2) groups are provided by glutamine, and one molecule of ATP is hydrogenolyzed for each amidation. The polypeptide is Cobyric acid synthase (Thermodesulfovibrio yellowstonii (strain ATCC 51303 / DSM 11347 / YP87)).